A 447-amino-acid chain; its full sequence is Ribosomal protein uS12 methylthiotransferase RimO (447 aa).

The region spanning 15–125 (PRVGFVSLGC…VMQAIHRHLP (111 aa)) is the MTTase N-terminal domain. Residues Cys-24, Cys-60, Cys-89, Cys-156, Cys-160, and Cys-163 each coordinate [4Fe-4S] cluster. In terms of domain architecture, Radical SAM core spans 142 to 379 (LTPKHYAYLK…MQWQEEISKK (238 aa)). Residues 379-447 (KRLAGKKGRI…GIHDLWAKKI (69 aa)) form the TRAM domain.

The protein belongs to the methylthiotransferase family. RimO subfamily. [4Fe-4S] cluster is required as a cofactor.

It localises to the cytoplasm. The catalysed reaction is L-aspartate(89)-[ribosomal protein uS12]-hydrogen + (sulfur carrier)-SH + AH2 + 2 S-adenosyl-L-methionine = 3-methylsulfanyl-L-aspartate(89)-[ribosomal protein uS12]-hydrogen + (sulfur carrier)-H + 5'-deoxyadenosine + L-methionine + A + S-adenosyl-L-homocysteine + 2 H(+). In terms of biological role, catalyzes the methylthiolation of an aspartic acid residue of ribosomal protein uS12. The polypeptide is Ribosomal protein uS12 methylthiotransferase RimO (Nitrosomonas europaea (strain ATCC 19718 / CIP 103999 / KCTC 2705 / NBRC 14298)).